The primary structure comprises 185 residues: Acireductone dioxygenase (185 aa).

4 residues coordinate Fe(2+): His-97, His-99, Glu-103, and His-141. Positions 97, 99, 103, and 141 each coordinate Ni(2+).

This sequence belongs to the acireductone dioxygenase (ARD) family. Monomer. Requires Fe(2+) as cofactor. The cofactor is Ni(2+).

The catalysed reaction is 1,2-dihydroxy-5-(methylsulfanyl)pent-1-en-3-one + O2 = 3-(methylsulfanyl)propanoate + CO + formate + 2 H(+). It carries out the reaction 1,2-dihydroxy-5-(methylsulfanyl)pent-1-en-3-one + O2 = 4-methylsulfanyl-2-oxobutanoate + formate + 2 H(+). It participates in amino-acid biosynthesis; L-methionine biosynthesis via salvage pathway; L-methionine from S-methyl-5-thio-alpha-D-ribose 1-phosphate: step 5/6. Catalyzes 2 different reactions between oxygen and the acireductone 1,2-dihydroxy-3-keto-5-methylthiopentene (DHK-MTPene) depending upon the metal bound in the active site. Fe-containing acireductone dioxygenase (Fe-ARD) produces formate and 2-keto-4-methylthiobutyrate (KMTB), the alpha-ketoacid precursor of methionine in the methionine recycle pathway. Ni-containing acireductone dioxygenase (Ni-ARD) produces methylthiopropionate, carbon monoxide and formate, and does not lie on the methionine recycle pathway. The polypeptide is Acireductone dioxygenase (Stenotrophomonas maltophilia (strain R551-3)).